The chain runs to 138 residues: MSGTLLAFDFGTKSIGVAVGQRITGTARPLPAIKAQDGTPDWNIIERLLKEWQPDEIIVGLPLNMDGTEQPLTARARKFANRIHGRFGVDVKLHDERLSTVEARSGLFEQGGYRALNKGKVDSASAVIILESYFEQGY.

Belongs to the YqgF nuclease family.

It localises to the cytoplasm. Could be a nuclease involved in processing of the 5'-end of pre-16S rRNA. This Shigella dysenteriae serotype 1 (strain Sd197) protein is Putative pre-16S rRNA nuclease.